The primary structure comprises 64 residues: Prokaryotic ubiquitin-like protein Pup (64 aa).

The interval 1–37 is disordered; it reads MAQEQTKRGGGGGEDDDLSGGAGAGQERREKLAEETD. Residues 21–58 form an ARC ATPase binding region; that stretch reads GAGAGQERREKLAEETDDLLDEIDDVLEENAEDFVRAY. Residues 24-52 are a coiled coil; that stretch reads AGQERREKLAEETDDLLDEIDDVLEENAE. Gln64 bears the Deamidated glutamine mark. Gln64 participates in a covalent cross-link: Isoglutamyl lysine isopeptide (Gln-Lys) (interchain with K-? in acceptor proteins).

Belongs to the prokaryotic ubiquitin-like protein family. In terms of assembly, strongly interacts with the proteasome-associated ATPase ARC through a hydrophobic interface; the interacting region of Pup lies in its C-terminal half. There is one Pup binding site per ARC hexamer ring. In terms of processing, is modified by deamidation of its C-terminal glutamine to glutamate by the deamidase Dop, a prerequisite to the subsequent pupylation process.

Its pathway is protein degradation; proteasomal Pup-dependent pathway. Functionally, protein modifier that is covalently attached to lysine residues of substrate proteins, thereby targeting them for proteasomal degradation. The tagging system is termed pupylation. This Mycobacterium sp. (strain JLS) protein is Prokaryotic ubiquitin-like protein Pup.